Consider the following 401-residue polypeptide: Probable [pyruvate dehydrogenase (acetyl-transferring)] kinase, mitochondrial (401 aa).

A Histidine kinase domain is found at 131–360 (LIELRESDGV…DACIYLKAVP (230 aa)). Residues 247 to 254 (ELFKNAMR), D286, 305 to 306 (ST), and 321 to 326 (GYGYGL) each bind ATP.

Belongs to the PDK/BCKDK protein kinase family.

Its subcellular location is the mitochondrion matrix. The enzyme catalyses L-seryl-[pyruvate dehydrogenase E1 alpha subunit] + ATP = O-phospho-L-seryl-[pyruvate dehydrogenase E1 alpha subunit] + ADP + H(+). Functionally, inhibits the mitochondrial pyruvate dehydrogenase complex by phosphorylation of the E1 alpha subunit, thus contributing to the regulation of glucose metabolism. Required for normal lifespan. The polypeptide is Probable [pyruvate dehydrogenase (acetyl-transferring)] kinase, mitochondrial (pdhk-2) (Caenorhabditis elegans).